The primary structure comprises 249 residues: ATP synthase subunit a, chloroplastic (249 aa).

5 consecutive transmembrane segments (helical) span residues 40–60, 97–117, 136–156, 201–221, and 222–242; these read QVLI…VLVV, VPFI…GALL, INTT…AGLS, LVVV…VMFL, and GLFT…AYIG.

Belongs to the ATPase A chain family. In terms of assembly, F-type ATPases have 2 components, CF(1) - the catalytic core - and CF(0) - the membrane proton channel. CF(1) has five subunits: alpha(3), beta(3), gamma(1), delta(1), epsilon(1). CF(0) has four main subunits: a, b, b' and c.

The protein localises to the plastid. Its subcellular location is the chloroplast thylakoid membrane. Functionally, key component of the proton channel; it plays a direct role in the translocation of protons across the membrane. This Aethionema grandiflorum (Persian stone-cress) protein is ATP synthase subunit a, chloroplastic.